The chain runs to 334 residues: Nucleoid-associated protein YejK (334 aa).

Belongs to the YejK family.

The protein localises to the cytoplasm. It is found in the nucleoid. In Escherichia fergusonii (strain ATCC 35469 / DSM 13698 / CCUG 18766 / IAM 14443 / JCM 21226 / LMG 7866 / NBRC 102419 / NCTC 12128 / CDC 0568-73), this protein is Nucleoid-associated protein YejK.